The following is a 603-amino-acid chain: Probable methyltransferase-like protein 25 (603 aa).

Residues 326 to 352 (TSSQQIPNRETSEANKERRKMTSKSSE) are disordered.

Functionally, probable methyltransferase. The polypeptide is Probable methyltransferase-like protein 25 (METTL25) (Homo sapiens (Human)).